A 109-amino-acid polypeptide reads, in one-letter code: Large ribosomal subunit protein uL22 (109 aa).

The protein belongs to the universal ribosomal protein uL22 family. As to quaternary structure, part of the 50S ribosomal subunit.

Functionally, this protein binds specifically to 23S rRNA; its binding is stimulated by other ribosomal proteins, e.g. L4, L17, and L20. It is important during the early stages of 50S assembly. It makes multiple contacts with different domains of the 23S rRNA in the assembled 50S subunit and ribosome. Its function is as follows. The globular domain of the protein is located near the polypeptide exit tunnel on the outside of the subunit, while an extended beta-hairpin is found that lines the wall of the exit tunnel in the center of the 70S ribosome. The polypeptide is Large ribosomal subunit protein uL22 (Thiobacillus denitrificans (strain ATCC 25259 / T1)).